The chain runs to 159 residues: Ribonuclease H (159 aa).

Residues 2–144 (SQDPVIIHTD…ADELATRGLQ (143 aa)) enclose the RNase H type-1 domain. Residues D11, E50, D72, and D136 each contribute to the Mg(2+) site.

This sequence belongs to the RNase H family. Monomer. Mg(2+) serves as cofactor.

It localises to the cytoplasm. It carries out the reaction Endonucleolytic cleavage to 5'-phosphomonoester.. In terms of biological role, endonuclease that specifically degrades the RNA of RNA-DNA hybrids. In Mycolicibacterium smegmatis (strain ATCC 700084 / mc(2)155) (Mycobacterium smegmatis), this protein is Ribonuclease H.